The primary structure comprises 341 residues: 2-acylglycerol O-acyltransferase 3 (341 aa).

Helical transmembrane passes span Tyr-29–Phe-49 and Thr-50–Pro-70. N-linked (GlcNAc...) asparagine glycosylation is present at Asn-126. The chain crosses the membrane as a helical span at residues Leu-137 to Tyr-157.

The protein belongs to the diacylglycerol acyltransferase family. Ubiquitinated. Ubiquitination leads to proteasomal degradation. In terms of tissue distribution, selectively expressed in the digestive system. Highly expressed in the ileum, and at lower level in jejunum, duodenum, colon, cecum and the rectum. Not expressed in the stomach and the esophagus and trachea. Expressed at very low level in liver.

The protein resides in the endoplasmic reticulum membrane. Its subcellular location is the cytoplasm. It is found in the perinuclear region. The catalysed reaction is a 2-acylglycerol + an acyl-CoA = a 1,2-diacylglycerol + CoA. It carries out the reaction an acyl-CoA + a 1,2-diacyl-sn-glycerol = a triacyl-sn-glycerol + CoA. It catalyses the reaction 2-(9Z-octadecenoyl)-glycerol + (9Z)-octadecenoyl-CoA = 1,2-di-(9Z-octadecenoyl)-sn-glycerol + CoA. The enzyme catalyses 2-(9Z-octadecenoyl)-glycerol + hexadecanoyl-CoA = 1-hexadecanoyl-2-(9Z-octadecenoyl)-sn-glycerol + CoA. The catalysed reaction is 1,2-di-(9Z-octadecenoyl)-sn-glycerol + (9Z)-octadecenoyl-CoA = 1,2,3-tri-(9Z-octadecenoyl)-glycerol + CoA. It carries out the reaction 1-hexadecanoyl-2-(9Z-octadecenoyl)-sn-glycerol + hexadecanoyl-CoA = 1,3-dihexadecanoyl-2-(9Z-octadecenoyl)glycerol + CoA. It catalyses the reaction all-trans-retinol + hexadecanoyl-CoA = all-trans-retinyl hexadecanoate + CoA. The enzyme catalyses 1-O-(9Z-octadecenyl)-glycerol + (9Z)-octadecenoyl-CoA = 1-O-(9Z-octadecyl)-3-(9Z-octadecenoyl)-glycerol + CoA. The catalysed reaction is 1-O-(9Z-octadecyl)-3-(9Z-octadecenoyl)-glycerol + (9Z)-octadecenoyl-CoA = 1-O-(9Z-octadecenyl)-2,3-di-(9Z-octadecenoyl)glycerol + CoA. It participates in glycerolipid metabolism; triacylglycerol biosynthesis. In terms of biological role, catalyzes the formation of diacylglycerol from 2-monoacylglycerol and fatty acyl-CoA. Also able to catalyze the terminal step in triacylglycerol synthesis by using diacylglycerol and fatty acyl-CoA as substrates. Has a preference toward palmitoyl-CoA and oleoyl-CoA. May be involved in absorption of dietary fat in the small intestine by catalyzing the resynthesis of triacylglycerol in enterocytes. Also able to use 1-monoalkylglycerol (1-MAkG) as an acyl acceptor for the synthesis of monoalkyl-monoacylglycerol (MAMAG). This is 2-acylglycerol O-acyltransferase 3 from Homo sapiens (Human).